Consider the following 359-residue polypeptide: F-box protein At5g49610 (359 aa).

An F-box domain is found at 3–52 (NQKGALFPDEVILQILARLPVKSLFRFKSVCKSWYRLPSDKYFTSLFNQL).

Part of a SCF (SKP1-cullin-F-box) protein ligase complex. Interacts with SKP1A, SKP1B, ASK11, ASK12, ASK13 and ASK14.

It participates in protein modification; protein ubiquitination. In Arabidopsis thaliana (Mouse-ear cress), this protein is F-box protein At5g49610.